A 76-amino-acid chain; its full sequence is DNA-directed RNA polymerase subunit epsilon (76 aa).

This sequence belongs to the RNA polymerase subunit epsilon family. As to quaternary structure, RNAP is composed of a core of 2 alpha, a beta and a beta' subunit. The core is associated with a delta subunit, and at least one of epsilon or omega. When a sigma factor is associated with the core the holoenzyme is formed, which can initiate transcription.

The enzyme catalyses RNA(n) + a ribonucleoside 5'-triphosphate = RNA(n+1) + diphosphate. Its function is as follows. A non-essential component of RNA polymerase (RNAP). In Streptococcus equi subsp. equi (strain 4047), this protein is DNA-directed RNA polymerase subunit epsilon.